A 407-amino-acid chain; its full sequence is uncharacterized protein (407 aa).

The next 11 helical transmembrane spans lie at 13–30, 40–62, 67–89, 118–140, 147–169, 179–199, 253–271, 281–303, 334–356, 361–378, and 385–402; these read IVFT…SPFL, VTPL…YYVL, ILGM…YNII, LAFA…VFSG, VYER…IRRL, AVGL…YYNY, WISG…SVFV, TEII…FGPL, GYLI…EIIA, AFAF…LVSF, and QFLV…IVLF.

It is found in the cell membrane. This is an uncharacterized protein from Aquifex aeolicus (strain VF5).